We begin with the raw amino-acid sequence, 1458 residues long: RNA-directed RNA polymerase P1 (1458 aa).

The segment at 148–168 (LSQDDRDEKGNDNREEEDVKN) is disordered. The RdRp catalytic domain occupies 686–894 (VGIGFATIYQ…KTVISHISGE (209 aa)). The tract at residues 971–993 (DESIENKPNRRGSKAKARSTKTN) is disordered. Basic residues predominate over residues 979-989 (NRRGSKAKARS).

The protein belongs to the reoviridae RNA-directed RNA polymerase family.

The protein localises to the virion. The protein resides in the host cytoplasm. The enzyme catalyses RNA(n) + a ribonucleoside 5'-triphosphate = RNA(n+1) + diphosphate. Functionally, RNA-directed RNA polymerase that is involved in both transcription and genome replication. Together with the capping enzyme P5 and protein P7, forms an enzyme complex positioned near the channels situated at each of the five-fold vertices of the core. The polypeptide is RNA-directed RNA polymerase P1 (Nephotettix cincticeps (Green rice leafhopper)).